The chain runs to 146 residues: Hemoglobin subunit beta-1 (146 aa).

A Globin domain is found at 2–146; it reads HWTEKERTII…VVSALGKQYH (145 aa). Heme b contacts are provided by His-63 and His-92.

This sequence belongs to the globin family. In terms of assembly, hb1 is a heterotetramer of two alpha chains and two beta-1 chains. In terms of tissue distribution, red blood cells.

Involved in oxygen transport from gills to the various peripheral tissues. The polypeptide is Hemoglobin subunit beta-1 (Dissostichus eleginoides (Patagonian toothfish)).